A 1506-amino-acid chain; its full sequence is Transcriptional repressor NF-X1 homolog (1506 aa).

Over residues 1–12 the composition is skewed to polar residues; that stretch reads MEESQNIPPKTQ. Disordered regions lie at residues 1–123, 142–164, and 181–282; these read MEES…NNQL, LKSE…QEPT, and KAFV…KKDI. Composition is skewed to low complexity over residues 13–103 and 110–121; these read TLNN…SNSN and HNNNYNNNNNNN. A compositionally biased stretch (low complexity) spans 194–209; the sequence is NNTNNNNNNNNNNNNN. Positions 217-232 are enriched in basic and acidic residues; the sequence is DNNRPQRERRERKPKE. Residues 240 to 252 are compositionally biased toward pro residues; it reads PQQPQQPQQPQPQ. Residues 253–263 are compositionally biased toward low complexity; that stretch reads PQQQQQSQQQQ. The span at 267–282 shows a compositional bias: basic and acidic residues; it reads ENNRKKENKLQSKKDI. The PHD-type zinc finger occupies 363–416; it reads IYECMVCFENVGKNAVIWSCSQCFTMFHSSCIKQWSSKSVTTEGKWKCPGCRYN. Residues 366 to 414 form an RING-type; degenerate zinc finger; the sequence is CMVCFENVGKNAVIWSCSQCFTMFHSSCIKQWSSKSVTTEGKWKCPGCR. 7 consecutive NF-X1-type zinc fingers follow at residues 460 to 478, 515 to 534, 581 to 600, 642 to 661, 739 to 758, 796 to 817, and 852 to 868; these read CPHS…NCSS, CGNH…PCEV, CGNH…PCSL, CKQH…SCKV, CGVH…NCYI, CGHS…PCTY, and CLSH…PCLI. Disordered regions lie at residues 897–1012 and 1021–1040; these read QQSK…VDLN and NEEE…DEDE. A compositionally biased stretch (low complexity) spans 903 to 921; sequence TTTTTTTTTTSTTSTTSPK. Acidic residues predominate over residues 925–934; the sequence is KDEELIEDDN. Over residues 935-980 the composition is skewed to low complexity; it reads NNNNNNNNNNNNNNNNNNNNNNNNNNNNNNNNNNNNNNNNNNNNNN. 2 stretches are compositionally biased toward basic and acidic residues: residues 981–1002 and 1021–1031; these read EKAE…HSDD and NEEEERIKKEE. The segment at 1062–1084 adopts an NF-X1-type 8 zinc-finger fold; that stretch reads CEHTCHQACHPGEPCPTNISCKQ. Disordered regions lie at residues 1132–1167 and 1447–1473; these read SHTL…SSPT and NQNQ…IKPT. 2 stretches are compositionally biased toward low complexity: residues 1137-1167 and 1447-1470; these read NNPN…SSPT and NQNQ…NINI.

It belongs to the NFX1 family.

The protein resides in the nucleus. Its function is as follows. May play a role in transcription regulation. The polypeptide is Transcriptional repressor NF-X1 homolog (nfx1) (Dictyostelium discoideum (Social amoeba)).